Reading from the N-terminus, the 3685-residue chain is Dystrophin (3685 aa).

The interval 1–240 (MLWWEEVEDC…YITSLFQVLP (240 aa)) is actin-binding. 2 consecutive Calponin-homology (CH) domains span residues 15–119 (DVQK…LHWQ) and 134–240 (TNSE…QVLP). An ANK2- and ANK-3 binding region spans residues 63 to 72 (PKEKGSTRVH). Spectrin repeat units follow at residues 339 to 447 (VNLD…NLHR), 448 to 556 (VLMD…LLQD), 559 to 667 (LKWQ…QISQ), 719 to 828 (EIRK…WLEY), 830 to 934 (NNII…ELQT), 943 to 1045 (RYQE…KLEE), 1048 to 1154 (NKLR…ALKG), 1157 to 1263 (EKTV…TLEE), 1266 to 1367 (ACWH…LLEQ), 1368 to 1463 (SIQS…LFQK), 1468 to 1568 (EQRL…QLEK), 1571 to 1676 (KLSR…LLLE), 1679 to 1778 (KHME…KASI), 1779 to 1874 (PLKE…KALE), 1877 to 1979 (HQWY…TVRE), 1992 to 2101 (EISY…RFDR), 2104 to 2208 (EKWR…RLEE), 2211 to 2318 (NILS…EIEA), 2319 to 2423 (QIKD…LRAK), 2475 to 2577 (FNRA…QLNE), 2580 to 2686 (KDST…ALEE), 2689 to 2802 (RLLQ…HLEA), 2808 to 2930 (KRLH…RKID), and 2935 to 3040 (RLRE…QLHE). Position 340 is a phosphothreonine (asparagine 340). Phosphoserine occurs at positions 344 and 348. A phosphothreonine mark is found at glutamate 519, serine 616, and serine 629. The tract at residues 1415 to 1913 (SDLTSHEISL…PEPRDERKIK (499 aa)) is interaction with SYNM. The WW domain maps to 3055–3088 (TSVQGPWERAISPNKVPYYINHETQTTCWDHPKM). The interaction with SYNM stretch occupies residues 3058–3408 (QGPWERAISP…TVLEGDNMET (351 aa)). The segment at 3308–3364 (KHQAKCNICKECPIIGFRYRSLKHFNYDICQSCFFSGRVAKGHKMHYPMVEYCTPTT) adopts a ZZ-type; degenerate zinc-finger fold. Zn(2+) is bound by residues cysteine 3313, cysteine 3316, cysteine 3337, and cysteine 3340. Residues 3466–3518 (DDEHLLIQHYCQSLNQDSPLSQPRSPAQILISLESEERGELERILADLEEENR) form a binds to SNTB1 region. A phosphoserine mark is found at serine 3483, serine 3490, and serine 3500. 2 disordered regions span residues 3528-3554 (KQQHEHKGLSPLPSPPEMMPTSPQSPR) and 3603-3685 (EAKV…EDTM). 2 stretches are compositionally biased toward polar residues: residues 3607–3626 (NGTTVSSPSTSLQRSDSSQP) and 3662–3673 (QLNNSFPSSRGR). 6 positions are modified to phosphoserine: serine 3612, serine 3613, serine 3617, serine 3623, serine 3624, and serine 3666.

Interacts with SYNM. Interacts with the syntrophins SNTA1, SNTB1, SNTB2, SNTG1 and SNTG2. Interacts with KRT19. Component of the dystrophin-associated glycoprotein complex which is composed of three subcomplexes: a cytoplasmic complex comprised of DMD (or UTRN), DTNA and a number of syntrophins, such as SNTB1, SNTB2, SNTG1 and SNTG2, the transmembrane dystroglycan complex, and the sarcoglycan-sarcospan complex. Interacts with DAG1 (betaDAG1) with DMD; the interaction is inhibited by phosphorylation on the PPXY motif of DAG1. Interacts with CMYA5. Directly interacts with ANK2 and ANK3; these interactions do not interfere with betaDAG1-binding and are necessary for proper localization in muscle cells. Identified in a dystroglycan complex that contains at least PRX, DRP2, UTRN, DMD and DAG1. Interacts with DTNB. Interacts with PGM5; the interaction is direct. Interacts with NOS1; localizes NOS1 to sarcolemma in muscle cells. Expressed in muscle fibers accumulating in the costameres of myoplasm at the sarcolemma. Expressed in brain, muscle, kidney, lung and testis. Most tissues contain transcripts of multiple isoforms. Isoform 15: Only isoform to be detected in heart and liver and is also expressed in brain, testis and hepatoma cells.

It is found in the cell membrane. It localises to the sarcolemma. Its subcellular location is the cytoplasm. The protein resides in the cytoskeleton. The protein localises to the postsynaptic cell membrane. Anchors the extracellular matrix to the cytoskeleton via F-actin. Ligand for dystroglycan. Component of the dystrophin-associated glycoprotein complex which accumulates at the neuromuscular junction (NMJ) and at a variety of synapses in the peripheral and central nervous systems and has a structural function in stabilizing the sarcolemma. Also implicated in signaling events and synaptic transmission. The protein is Dystrophin of Homo sapiens (Human).